The primary structure comprises 216 residues: Thiosulfate dehydrogenase electron acceptor (216 aa).

Residues 1–22 (MKSIHWPLAGVAALLLSMQAQA) form the signal peptide. 2 Cytochrome c domains span residues 23-108 (ADGQ…EAMP) and 118-210 (SEAA…ANVG). Residues Cys-41, Cys-44, His-45, Cys-141, Cys-144, and His-145 each contribute to the heme c site.

In terms of processing, binds 2 heme c groups covalently per subunit.

Functionally, acts as an electron acceptor for the thiosulfate dehydrogenase TsdA. The protein is Thiosulfate dehydrogenase electron acceptor (tsdB) of Stutzerimonas stutzeri (strain A1501) (Pseudomonas stutzeri).